A 154-amino-acid chain; its full sequence is PTS system fructose-specific EIIA component (154 aa).

Residues Thr-8 to Val-152 enclose the PTS EIIA type-2 domain. Catalysis depends on His-70, which acts as the Tele-phosphohistidine intermediate. His-70 carries the post-translational modification Phosphohistidine; by HPr.

It is found in the cytoplasm. In terms of biological role, the phosphoenolpyruvate-dependent sugar phosphotransferase system (sugar PTS), a major carbohydrate active transport system, catalyzes the phosphorylation of incoming sugar substrates concomitantly with their translocation across the cell membrane. The enzyme II PtfABC PTS system is involved in fructose transport. This chain is PTS system fructose-specific EIIA component, found in Haloferax volcanii (strain ATCC 29605 / DSM 3757 / JCM 8879 / NBRC 14742 / NCIMB 2012 / VKM B-1768 / DS2) (Halobacterium volcanii).